The primary structure comprises 420 residues: Pyridinium-3,5-bisthiocarboxylic acid mononucleotide nickel insertion protein (420 aa).

The protein belongs to the LarC family.

It carries out the reaction Ni(II)-pyridinium-3,5-bisthiocarboxylate mononucleotide = pyridinium-3,5-bisthiocarboxylate mononucleotide + Ni(2+). Functionally, involved in the biosynthesis of a nickel-pincer cofactor ((SCS)Ni(II) pincer complex). Binds Ni(2+), and functions in nickel delivery to pyridinium-3,5-bisthiocarboxylic acid mononucleotide (P2TMN), to form the mature cofactor. Is required for the activation of the lactate racemase LarA. May also be involved in the activation of other nickel-pincer cofactor-dependent enzymes. This chain is Pyridinium-3,5-bisthiocarboxylic acid mononucleotide nickel insertion protein, found in Lactiplantibacillus plantarum (strain ATCC BAA-793 / NCIMB 8826 / WCFS1) (Lactobacillus plantarum).